Consider the following 188-residue polypeptide: dCTP deaminase (188 aa).

DCTP-binding positions include 111 to 116 (KSTYAR), 135 to 137 (TLE), Q156, Y170, and Q180. E137 acts as the Proton donor/acceptor in catalysis.

The protein belongs to the dCTP deaminase family. In terms of assembly, homotrimer.

It catalyses the reaction dCTP + H2O + H(+) = dUTP + NH4(+). It participates in pyrimidine metabolism; dUMP biosynthesis; dUMP from dCTP (dUTP route): step 1/2. In terms of biological role, catalyzes the deamination of dCTP to dUTP. The protein is dCTP deaminase of Neisseria meningitidis serogroup C / serotype 2a (strain ATCC 700532 / DSM 15464 / FAM18).